The chain runs to 428 residues: Adenylosuccinate synthetase (428 aa).

Residues 12–18 (GDEGKGK) and 40–42 (GHT) each bind GTP. Residue D13 is the Proton acceptor of the active site. Residues D13 and G40 each contribute to the Mg(2+) site. IMP is bound by residues 13 to 16 (DEGK), 38 to 41 (NAGH), T128, R142, Q223, T238, and R302. The active-site Proton donor is the H41. 298 to 304 (TTTGRPR) contributes to the substrate binding site. Residues R304, 330–332 (SID), and 412–414 (SVG) contribute to the GTP site.

It belongs to the adenylosuccinate synthetase family. As to quaternary structure, homodimer. The cofactor is Mg(2+).

Its subcellular location is the cytoplasm. The catalysed reaction is IMP + L-aspartate + GTP = N(6)-(1,2-dicarboxyethyl)-AMP + GDP + phosphate + 2 H(+). Its pathway is purine metabolism; AMP biosynthesis via de novo pathway; AMP from IMP: step 1/2. Its function is as follows. Plays an important role in the de novo pathway of purine nucleotide biosynthesis. Catalyzes the first committed step in the biosynthesis of AMP from IMP. The polypeptide is Adenylosuccinate synthetase (Shouchella clausii (strain KSM-K16) (Alkalihalobacillus clausii)).